The chain runs to 31 residues: PTEN upstream open reading frame MP31 (31 aa).

Interacts with lactate dehydrogenases LDHA and LDHB; interaction with mitochondrial LDH leads to inhibition of lactate dehydrogenase activity, preventing conversion of lactate to pyruvate. As to expression, expressed in brain (at protein level). Expressed at lower levels in glioblastomas than in normal brain tissue (at protein level).

The protein resides in the mitochondrion. Its function is as follows. Inhibits lactate dehydrogenase (LDH)-mediated conversion of lactate to pyruvate in mitochondria by competing with mitochondrial LDH for binding to NAD(+). Also inhibits cellular lactate utilization. The sequence is that of PTEN upstream open reading frame MP31 from Homo sapiens (Human).